The chain runs to 281 residues: Probable endonuclease 4 (281 aa).

Residues H67, H107, E144, D178, H181, H215, D228, H230, and E260 each coordinate Zn(2+).

Belongs to the AP endonuclease 2 family. It depends on Zn(2+) as a cofactor.

The catalysed reaction is Endonucleolytic cleavage to 5'-phosphooligonucleotide end-products.. In terms of biological role, endonuclease IV plays a role in DNA repair. It cleaves phosphodiester bonds at apurinic or apyrimidinic (AP) sites, generating a 3'-hydroxyl group and a 5'-terminal sugar phosphate. The sequence is that of Probable endonuclease 4 from Methanocorpusculum labreanum (strain ATCC 43576 / DSM 4855 / Z).